Reading from the N-terminus, the 503-residue chain is Lycopene beta cyclase, chloroplastic/chromoplastic (503 aa).

The transit peptide at 1-85 directs the protein to the chloroplast and chromoplast; it reads MDTLLRTHNR…DLPLYDPSKA (85 aa). 90–117 is a binding site for NAD(+); the sequence is LAVVGGGPLARSCSTSLGGGLSVVSIDP.

It belongs to the lycopene cyclase family.

The protein localises to the plastid. Its subcellular location is the chloroplast. It localises to the chromoplast. The protein resides in the chromoplast membrane. It is found in the chloroplast membrane. It carries out the reaction a carotenoid psi-end group = a carotenoid beta-end derivative. Its pathway is carotenoid biosynthesis; beta-carotene biosynthesis. The protein operates within carotenoid biosynthesis; beta-zeacarotene biosynthesis. Its function is as follows. Catalyzes the double cyclization reaction which converts lycopene to beta-carotene and neurosporene to beta-zeacarotene. This is Lycopene beta cyclase, chloroplastic/chromoplastic (LCY1) from Narcissus pseudonarcissus (Daffodil).